Here is a 543-residue protein sequence, read N- to C-terminus: Chaperonin GroEL 7 (543 aa).

ATP-binding positions include 30–33 (TLGP), Lys-51, 87–91 (DGTTT), Gly-415, and Asp-496.

It belongs to the chaperonin (HSP60) family. Forms a cylinder of 14 subunits composed of two heptameric rings stacked back-to-back. Interacts with the co-chaperonin GroES.

It is found in the cytoplasm. It catalyses the reaction ATP + H2O + a folded polypeptide = ADP + phosphate + an unfolded polypeptide.. Together with its co-chaperonin GroES, plays an essential role in assisting protein folding. The GroEL-GroES system forms a nano-cage that allows encapsulation of the non-native substrate proteins and provides a physical environment optimized to promote and accelerate protein folding. In Bradyrhizobium diazoefficiens (strain JCM 10833 / BCRC 13528 / IAM 13628 / NBRC 14792 / USDA 110), this protein is Chaperonin GroEL 7.